Reading from the N-terminus, the 54-residue chain is uncharacterized protein (54 aa).

A compositionally biased stretch (basic and acidic residues) spans 23–35 (DVMQEGETAKELN). The tract at residues 23–54 (DVMQEGETAKELNYEGEDMQATSSAQNRQTSV) is disordered. The segment covering 42–54 (QATSSAQNRQTSV) has biased composition (polar residues).

This is an uncharacterized protein from Bacillus subtilis (strain 168).